A 430-amino-acid polypeptide reads, in one-letter code: Histidine--tRNA ligase (430 aa).

It belongs to the class-II aminoacyl-tRNA synthetase family. Homodimer.

It is found in the cytoplasm. It catalyses the reaction tRNA(His) + L-histidine + ATP = L-histidyl-tRNA(His) + AMP + diphosphate + H(+). This chain is Histidine--tRNA ligase, found in Lactococcus lactis subsp. lactis (strain IL1403) (Streptococcus lactis).